Here is a 1169-residue protein sequence, read N- to C-terminus: DNA repair protein RAD5 (1169 aa).

At Ser2 the chain carries N-acetylserine. Residues Ser20, Ser23, Ser129, and Ser130 each carry the phosphoserine modification. Over residues 302–317 (MKRRRTEGGNKREKDN) the composition is skewed to basic and acidic residues. The segment at 302–327 (MKRRRTEGGNKREKDNGNFGRTLTET) is disordered. In terms of domain architecture, Helicase ATP-binding spans 519–730 (PILKTMIKGG…YSLVKFLELD (212 aa)). Residue 532–539 (DEMGLGKT) participates in ATP binding. Residues 681-684 (DEGH) carry the DEGH box motif. The RING-type zinc-finger motif lies at 914–961 (CSICTTEPMDLDKALFTECGHSFCEKCLFEYIEFQNSKNLGLKCPNCR). The 171-residue stretch at 995-1165 (KITALLKELQ…RRKRRIEEIQ (171 aa)) folds into the Helicase C-terminal domain.

It belongs to the SNF2/RAD54 helicase family. Homodimer. Interacts with POL30, RAD18, UBC9 and UBC13. It depends on Mg(2+) as a cofactor. The cofactor is Mn(2+). Requires Ca(2+) as cofactor.

Its subcellular location is the cytoplasm. It localises to the nucleus. In terms of biological role, probable helicase, member of the UBC2/RAD6 epistasis group. Functions with the DNA repair protein RAD18 in error-free postreplication DNA repair. Involved in the maintenance of wild-type rates of instability of simple repetitive sequences such as poly(GT) repeats. Seems to be involved in maintaining a balance which acts in favor of error-prone non-homologous joining during DNA double-strand breaks repairs. Recruits the UBC13-MMS2 dimer to chromatin for DNA repair. The polypeptide is DNA repair protein RAD5 (RAD5) (Saccharomyces cerevisiae (strain ATCC 204508 / S288c) (Baker's yeast)).